The following is a 908-amino-acid chain: Alanine--tRNA ligase (908 aa).

Residues His588, His592, Cys691, and His695 each contribute to the Zn(2+) site.

Belongs to the class-II aminoacyl-tRNA synthetase family. Zn(2+) is required as a cofactor.

The protein localises to the cytoplasm. The enzyme catalyses tRNA(Ala) + L-alanine + ATP = L-alanyl-tRNA(Ala) + AMP + diphosphate. Its function is as follows. Catalyzes the attachment of alanine to tRNA(Ala) in a two-step reaction: alanine is first activated by ATP to form Ala-AMP and then transferred to the acceptor end of tRNA(Ala). Also edits incorrectly charged Ser-tRNA(Ala) and Gly-tRNA(Ala) via its editing domain. This Mycobacterium leprae (strain TN) protein is Alanine--tRNA ligase.